Here is a 461-residue protein sequence, read N- to C-terminus: Glycine--tRNA ligase (461 aa).

Substrate contacts are provided by arginine 100 and glutamate 174. ATP is bound by residues 206–208, 216–221, 290–291, and 334–337; these read RNE, FRTREF, EL, and GVDR. 221-225 lines the substrate pocket; the sequence is FEQME. A substrate-binding site is contributed by 330–334; sequence EPSVG.

The protein belongs to the class-II aminoacyl-tRNA synthetase family. As to quaternary structure, homodimer.

It localises to the cytoplasm. The enzyme catalyses tRNA(Gly) + glycine + ATP = glycyl-tRNA(Gly) + AMP + diphosphate. Catalyzes the attachment of glycine to tRNA(Gly). The protein is Glycine--tRNA ligase of Caldanaerobacter subterraneus subsp. tengcongensis (strain DSM 15242 / JCM 11007 / NBRC 100824 / MB4) (Thermoanaerobacter tengcongensis).